The chain runs to 534 residues: Allene oxide synthase 1, chloroplastic (534 aa).

Disordered regions lie at residues 1–31 (MAST…SSYR) and 43–71 (EIPP…LPAQ). A chloroplast-targeting transit peptide spans 1–69 (MASTSLSLPS…SPPVKQAKLP (69 aa)). Low complexity-rich tracts occupy residues 17–31 (SHTS…SSYR) and 43–62 (EIPP…SSPP). The heme b site is built by K149, H180, and K184. (13S)-hydroperoxy-(9Z,11E)-octadecadienoate is bound by residues N337 and K343. (13S)-hydroperoxy-(9Z,11E,15Z)-octadecatrienoate is bound at residue N337. Heme b contacts are provided by K485 and C487.

Belongs to the cytochrome P450 family. Heme b is required as a cofactor. As to expression, expressed in flowers. Detected in stems and roots, but not in leaves and fruits under non-inducing conditions.

Its subcellular location is the plastid. It is found in the chloroplast. It carries out the reaction (13S)-hydroperoxy-(9Z,11E,15Z)-octadecatrienoate = (9Z,13S,15Z)-12,13-epoxyoctadeca-9,11,15-trienoate + H2O. It catalyses the reaction (13S)-hydroperoxy-(9Z,11E)-octadecadienoate = (9Z,13S)-12,13-epoxyoctadeca-9,11-dienoate + H2O. In terms of biological role, cytochrome P450 of the CYP74A subfamily involved in the biosynthesis of jasmonic acid from lipoxygenase-derived hydroperoxides of free fatty acids. Catalyzes the synthesis of unstable allene oxide, which is further converted spontaneously by hydrolysis or cyclization. Can use 13S-hydroperoxy-9(Z),11(E),15(Z)-octadecatrienoic acid (13-HPOT) and 13S-hydroperoxy-9(Z),11(E)-octadecadienoic acid (13-HPOD) as substrates. The protein is Allene oxide synthase 1, chloroplastic of Solanum lycopersicum (Tomato).